A 378-amino-acid chain; its full sequence is Succinyl-diaminopimelate desuccinylase (378 aa).

His66 contributes to the Zn(2+) binding site. Residue Asp68 is part of the active site. Asp100 contacts Zn(2+). Glu134 serves as the catalytic Proton acceptor. Glu135, Glu163, and His350 together coordinate Zn(2+).

This sequence belongs to the peptidase M20A family. DapE subfamily. As to quaternary structure, homodimer. Requires Zn(2+) as cofactor. It depends on Co(2+) as a cofactor.

The enzyme catalyses N-succinyl-(2S,6S)-2,6-diaminopimelate + H2O = (2S,6S)-2,6-diaminopimelate + succinate. It participates in amino-acid biosynthesis; L-lysine biosynthesis via DAP pathway; LL-2,6-diaminopimelate from (S)-tetrahydrodipicolinate (succinylase route): step 3/3. Catalyzes the hydrolysis of N-succinyl-L,L-diaminopimelic acid (SDAP), forming succinate and LL-2,6-diaminopimelate (DAP), an intermediate involved in the bacterial biosynthesis of lysine and meso-diaminopimelic acid, an essential component of bacterial cell walls. The sequence is that of Succinyl-diaminopimelate desuccinylase from Hydrogenovibrio crunogenus (strain DSM 25203 / XCL-2) (Thiomicrospira crunogena).